Consider the following 794-residue polypeptide: K(+)-insensitive pyrophosphate-energized proton pump (794 aa).

The next 5 membrane-spanning stretches (helical) occupy residues 20–40 (ALVAVIAVVALAALVLAGVLV), 74–94 (TLGVFAVVVFFLLMLLPADDW), 102–122 (IFFLIGAAFSAATGYIGMWLA), 163–183 (GVVGMFTVGLGLLGACCVVLV), and 194–214 (GFGLGAALIAMFMRVGGGIFT). K215 lines the substrate pocket. Residues D218, D222, N245, and D248 each coordinate Mg(2+). A run of 6 helical transmembrane segments spans residues 264-284 (YAVTLVAALILGKVAFGDFGL), 285-305 (AFPLLVPAIGVLTAMIGIFAV), 321-341 (GFFISAVISLVLVAVAVFVYL), 365-385 (ILALVAVAIGIVLAALIQQLT), 422-442 (AVYTALLIGLGVYGAFLLGGT), and 446-466 (LALFAVALAGTGLLTTVGVIV). Mg(2+) is bound at residue D476. 3 consecutive transmembrane segments (helical) span residues 508–528 (AITKGIAIATAVLAAAALFGS), 564–584 (VGLIAGAAVVFLFSGLAINAV), and 641–661 (IFIGFTLGVGALGAFLAGAIG). D678, D704, and D708 together coordinate Ca(2+). Position 711 (K711) interacts with substrate. A run of 2 helical transmembrane segments spans residues 717-737 (AINPLLKVMNLVALLIAPAVI) and 747-767 (VVVRVLIAVVAFAVIAAAVYV).

This sequence belongs to the H(+)-translocating pyrophosphatase (TC 3.A.10) family. K(+)-insensitive subfamily. In terms of assembly, homodimer. The cofactor is Mg(2+).

The protein localises to the cell membrane. It carries out the reaction diphosphate + H2O + H(+)(in) = 2 phosphate + 2 H(+)(out). In terms of biological role, proton pump that utilizes the energy of pyrophosphate hydrolysis as the driving force for proton movement across the membrane. Generates a proton motive force. The polypeptide is K(+)-insensitive pyrophosphate-energized proton pump (Streptomyces coelicolor (strain ATCC BAA-471 / A3(2) / M145)).